An 85-amino-acid chain; its full sequence is U4-theraphotoxin-Hhn1t (85 aa).

The signal sequence occupies residues 1 to 22 (MKVTLIAILTCAAVLVLHTTAA). The propeptide occupies 23–48 (EELEAESQLMEVGMPDTELAAVDEER). 3 disulfides stabilise this stretch: cysteine 52–cysteine 66, cysteine 56–cysteine 77, and cysteine 71–cysteine 82.

The protein belongs to the neurotoxin 12 (Hwtx-2) family. 02 (Hwtx-2) subfamily. Expressed by the venom gland.

It is found in the secreted. Functionally, postsynaptic neurotoxin. The protein is U4-theraphotoxin-Hhn1t of Cyriopagopus hainanus (Chinese bird spider).